Reading from the N-terminus, the 381-residue chain is Dual-specificity RNA methyltransferase RlmN (381 aa).

Residue Glu96 is the Proton acceptor of the active site. Positions 102–342 constitute a Radical SAM core domain; sequence TDDRGTLCVS…TRTTRGDDID (241 aa). The cysteines at positions 109 and 345 are disulfide-linked. Residues Cys116, Cys120, and Cys123 each coordinate [4Fe-4S] cluster. Residues 170–171, Ser202, 224–226, and Asn302 each bind S-adenosyl-L-methionine; these read GE and SLH. Cys345 functions as the S-methylcysteine intermediate in the catalytic mechanism.

The protein belongs to the radical SAM superfamily. RlmN family. [4Fe-4S] cluster serves as cofactor.

Its subcellular location is the cytoplasm. It catalyses the reaction adenosine(2503) in 23S rRNA + 2 reduced [2Fe-2S]-[ferredoxin] + 2 S-adenosyl-L-methionine = 2-methyladenosine(2503) in 23S rRNA + 5'-deoxyadenosine + L-methionine + 2 oxidized [2Fe-2S]-[ferredoxin] + S-adenosyl-L-homocysteine. The enzyme catalyses adenosine(37) in tRNA + 2 reduced [2Fe-2S]-[ferredoxin] + 2 S-adenosyl-L-methionine = 2-methyladenosine(37) in tRNA + 5'-deoxyadenosine + L-methionine + 2 oxidized [2Fe-2S]-[ferredoxin] + S-adenosyl-L-homocysteine. Specifically methylates position 2 of adenine 2503 in 23S rRNA and position 2 of adenine 37 in tRNAs. m2A2503 modification seems to play a crucial role in the proofreading step occurring at the peptidyl transferase center and thus would serve to optimize ribosomal fidelity. The sequence is that of Dual-specificity RNA methyltransferase RlmN from Pseudomonas putida (strain GB-1).